The following is a 281-amino-acid chain: Probable ABC transporter ATP-binding protein AZC_3926 (281 aa).

The interval 1-38 is disordered; sequence MNVLSMFGRNATRETSSPAATAGRYADEGDWEGDDHQP. The region spanning 45 to 277 is the ABC transporter domain; that stretch reads LAAFGLAKSY…PDVRRLYLGE (233 aa). An ATP-binding site is contributed by 77 to 84; sequence GPNGAGKT.

The protein belongs to the ABC transporter superfamily.

The polypeptide is Probable ABC transporter ATP-binding protein AZC_3926 (Azorhizobium caulinodans (strain ATCC 43989 / DSM 5975 / JCM 20966 / LMG 6465 / NBRC 14845 / NCIMB 13405 / ORS 571)).